A 296-amino-acid chain; its full sequence is MTTLENPEMQAQLLSAALPYMQRYENKHVVVKYGGHAMGNPELGKAFARDIALLKQSGINPIVVHGGGPQIQAMLTKLGIESRFEGGLRVTDEKTVEVVEMVLAGSINKEIVALINAEGEWAIGLCGKDGNMVFAQKAHKTVIDPDSNIEKVLDLGFVGEPAEVDRTLLDLLARSEMIPVIAPVAPGRDGHTYNINADTFAGAIAGALAATRLLFLTDVPGVLDKDKNLIKELSVADAQALIKDGTISGGMIPKVETCIEAIRRGVEGVVILNGKTPHSVLLELFTEHGAGTLIVP.

Substrate contacts are provided by residues 67–68 (GG), Arg89, and Asn194.

It belongs to the acetylglutamate kinase family. ArgB subfamily.

Its subcellular location is the cytoplasm. It carries out the reaction N-acetyl-L-glutamate + ATP = N-acetyl-L-glutamyl 5-phosphate + ADP. It functions in the pathway amino-acid biosynthesis; L-arginine biosynthesis; N(2)-acetyl-L-ornithine from L-glutamate: step 2/4. In terms of biological role, catalyzes the ATP-dependent phosphorylation of N-acetyl-L-glutamate. This chain is Acetylglutamate kinase, found in Brucella anthropi (strain ATCC 49188 / DSM 6882 / CCUG 24695 / JCM 21032 / LMG 3331 / NBRC 15819 / NCTC 12168 / Alc 37) (Ochrobactrum anthropi).